The sequence spans 460 residues: Sorting nexin-4 (460 aa).

Over residues 1–16 the composition is skewed to polar residues; the sequence is MTATEQQQDDFSNVSW. Residues 1–53 are disordered; sequence MTATEQQQDDFSNVSWSEHVHDQQTRSVPDAEEPGHDMNAPGTGLERDAPSLG. A PX domain is found at 56 to 178; the sequence is KLECTVDTPI…TFLESPDWNA (123 aa). Coiled coils occupy residues 238–266, 306–337, and 374–403; these read EKVIARVARREADLEVDLRDLAEQFQKLI, RDMQAYSIALKNLLKAREQKQLDYEQLTEYLN, and QARRERTRKLELRVEELTHEVESARKTSDM.

Belongs to the sorting nexin family. As to quaternary structure, forms a complex with ATG20 and ATG17.

It localises to the cytoplasm. It is found in the membrane. The protein localises to the endosome membrane. In terms of biological role, sorting nexin involved in the separation or division of vacuoles throughout the entire life cycle of the cells. Involved in retrieval of late-Golgi SNAREs from post-Golgi endosomes to the trans-Golgi network, for cytoplasm to vacuole transport (Cvt), and autophagy of large cargos including mitophagy, pexophagy and glycophagy. Autophagy is required for proper vegetative growth, asexual/sexual reproduction, and full virulence. Autophagy is particularly involved in the biosynthesis of deoxynivalenol (DON), an important virulence determinant. The chain is Sorting nexin-4 from Gibberella zeae (strain ATCC MYA-4620 / CBS 123657 / FGSC 9075 / NRRL 31084 / PH-1) (Wheat head blight fungus).